The following is a 62-amino-acid chain: Large ribosomal subunit protein uL30 (62 aa).

The protein belongs to the universal ribosomal protein uL30 family. In terms of assembly, part of the 50S ribosomal subunit.

This Cereibacter sphaeroides (strain ATCC 17029 / ATH 2.4.9) (Rhodobacter sphaeroides) protein is Large ribosomal subunit protein uL30.